Reading from the N-terminus, the 148-residue chain is UPF0756 membrane protein YeaL (148 aa).

4 consecutive transmembrane segments (helical) span residues 14-34, 51-71, 86-106, and 121-141; these read ALGF…LIIV, LSIG…SGTL, LVAI…VTLM, and VLGV…AGLV.

This sequence belongs to the UPF0756 family.

The protein resides in the cell membrane. The protein is UPF0756 membrane protein YeaL of Shigella flexneri.